We begin with the raw amino-acid sequence, 35 residues long: Alpha-amanitin proprotein 1 (35 aa).

Residues 1-10 (MSDINATRLP) constitute a propeptide that is removed on maturation. The residue at position 11 (Ile-11) is a (3R,4R)-4,5-dihydroxyisoleucine; in form alpha-amanitin. Ile-11 bears the (3R,4S)-4-hydroxyisoleucine; in form gamma-amanitin mark. The cyclopeptide (Ile-Pro) cross-link spans 11–18 (IWGIGCNP). A cross-link (2'-cysteinyl-6'-hydroxytryptophan sulfoxide (Trp-Cys)) is located at residues 12–16 (WGIGC). A 4-hydroxyproline modification is found at Pro-18. Residues 19–35 (CVGDDVTSVLTRGEALC) constitute a propeptide that is removed on maturation.

It belongs to the MSDIN fungal toxin family. Post-translationally, processed by the macrocyclase-peptidase enzyme POPB to yield a toxic cyclic octapeptide. POPB first removes 10 residues from the N-terminus. Conformational trapping of the remaining peptide forces the enzyme to release this intermediate rather than proceed to macrocyclization. The enzyme rebinds the remaining peptide in a different conformation and catalyzes macrocyclization of the N-terminal 8 residues. In terms of tissue distribution, expressed in basidiocarps.

Functionally, major toxin belonging to the bicyclic octapeptides amatoxins that acts by binding non-competitively to RNA polymerase II and greatly slowing the elongation of transcripts from target promoters. This chain is Alpha-amanitin proprotein 1, found in Amanita exitialis (Guangzhou destroying angel).